A 256-amino-acid polypeptide reads, in one-letter code: Hydroxyacylglutathione hydrolase (256 aa).

Zn(2+)-binding residues include His57, His59, Asp61, His62, His115, Asp134, and His172.

The protein belongs to the metallo-beta-lactamase superfamily. Glyoxalase II family. In terms of assembly, monomer. The cofactor is Zn(2+).

It catalyses the reaction an S-(2-hydroxyacyl)glutathione + H2O = a 2-hydroxy carboxylate + glutathione + H(+). It participates in secondary metabolite metabolism; methylglyoxal degradation; (R)-lactate from methylglyoxal: step 2/2. Its function is as follows. Thiolesterase that catalyzes the hydrolysis of S-D-lactoyl-glutathione to form glutathione and D-lactic acid. This chain is Hydroxyacylglutathione hydrolase, found in Rhizobium etli (strain ATCC 51251 / DSM 11541 / JCM 21823 / NBRC 15573 / CFN 42).